The following is a 118-amino-acid chain: Small ribosomal subunit protein bS6 (118 aa).

Residues Thr98–Glu118 form a disordered region. Residues Ala99–Glu118 are compositionally biased toward low complexity.

The protein belongs to the bacterial ribosomal protein bS6 family.

Its function is as follows. Binds together with bS18 to 16S ribosomal RNA. This chain is Small ribosomal subunit protein bS6, found in Geobacter metallireducens (strain ATCC 53774 / DSM 7210 / GS-15).